We begin with the raw amino-acid sequence, 435 residues long: MDVMQAAGLIPATPPAPVLVAYSGGMDSAVLLHALAATDGYREAGLRAVHVHHGLHADADAWALHCQQQCADLGIALQVVRVQVARDSGSGLEAAARAARHAAFAATLAAGEWLALAHHRDDQAETFLLRALRASGPDGLAAMRPQRPFGPGTLWRPLLGHARADLAAYAQAHAVRWIDDPSNTDPQHERNFLRTQVLPALQQRWPLAADALARSAQLCGDASTLLHDDDVNLLPTVCNSAGALELQPLRSHSPARRARLLRAWVAAAHAPPLPAQGVHALEREIATTQPDRQTCFAWQQTEIRRWRQQLYLLSARATWPAQWQAEWNGDSTLLLPDGAQLQLRGTPGLRFEQPLQVRARQGGERIVLPGRTHSHQLKHLLQQSDLPPWERTRLPLLWAGKTLLAAGDQIVSAKLDQWLRAHAARLQWRSAAPAN.

23–28 (SGGMDS) lines the ATP pocket.

It belongs to the tRNA(Ile)-lysidine synthase family.

Its subcellular location is the cytoplasm. It carries out the reaction cytidine(34) in tRNA(Ile2) + L-lysine + ATP = lysidine(34) in tRNA(Ile2) + AMP + diphosphate + H(+). Its function is as follows. Ligates lysine onto the cytidine present at position 34 of the AUA codon-specific tRNA(Ile) that contains the anticodon CAU, in an ATP-dependent manner. Cytidine is converted to lysidine, thus changing the amino acid specificity of the tRNA from methionine to isoleucine. This chain is tRNA(Ile)-lysidine synthase, found in Xanthomonas campestris pv. campestris (strain 8004).